Reading from the N-terminus, the 335-residue chain is Glutamyl-tRNA reductase (335 aa).

Substrate-binding positions include 60 to 63 (TCHR), serine 110, 115 to 117 (ETE), and glutamine 121. The active-site Nucleophile is the cysteine 61. 189–194 (GYSEIN) serves as a coordination point for NADP(+).

It belongs to the glutamyl-tRNA reductase family. In terms of assembly, homodimer.

It carries out the reaction (S)-4-amino-5-oxopentanoate + tRNA(Glu) + NADP(+) = L-glutamyl-tRNA(Glu) + NADPH + H(+). Its pathway is porphyrin-containing compound metabolism; protoporphyrin-IX biosynthesis; 5-aminolevulinate from L-glutamyl-tRNA(Glu): step 1/2. In terms of biological role, catalyzes the NADPH-dependent reduction of glutamyl-tRNA(Glu) to glutamate 1-semialdehyde (GSA). The chain is Glutamyl-tRNA reductase from Chlamydia trachomatis serovar L2 (strain ATCC VR-902B / DSM 19102 / 434/Bu).